The primary structure comprises 84 residues: Cell division topological specificity factor (84 aa).

It belongs to the MinE family.

Prevents the cell division inhibition by proteins MinC and MinD at internal division sites while permitting inhibition at polar sites. This ensures cell division at the proper site by restricting the formation of a division septum at the midpoint of the long axis of the cell. The chain is Cell division topological specificity factor from Burkholderia cenocepacia (strain ATCC BAA-245 / DSM 16553 / LMG 16656 / NCTC 13227 / J2315 / CF5610) (Burkholderia cepacia (strain J2315)).